The sequence spans 299 residues: tRNA(Met) cytidine acetate ligase (299 aa).

Residues 6–19 (IAEY…HIYM), Gly-100, Asn-157, and Arg-182 contribute to the ATP site.

It belongs to the TmcAL family.

It is found in the cytoplasm. The enzyme catalyses cytidine(34) in elongator tRNA(Met) + acetate + ATP = N(4)-acetylcytidine(34) in elongator tRNA(Met) + AMP + diphosphate. Catalyzes the formation of N(4)-acetylcytidine (ac(4)C) at the wobble position of elongator tRNA(Met), using acetate and ATP as substrates. First activates an acetate ion to form acetyladenylate (Ac-AMP) and then transfers the acetyl group to tRNA to form ac(4)C34. In Mycoplasma mobile (strain ATCC 43663 / 163K / NCTC 11711) (Mesomycoplasma mobile), this protein is tRNA(Met) cytidine acetate ligase.